Reading from the N-terminus, the 68-residue chain is MKASELRALDDAQLRAKLSEYKVELFNLRFQKATGKLTNTARPKQVKKDIARILTILRERELAQAELG.

Belongs to the universal ribosomal protein uL29 family.

The chain is Large ribosomal subunit protein uL29 from Chloroflexus aggregans (strain MD-66 / DSM 9485).